The primary structure comprises 396 residues: Elongation factor Tu 1 (396 aa).

Positions 10–206 (KPHVNVGTIG…ALDTYIPTPE (197 aa)) constitute a tr-type G domain. The interval 19–26 (GHVDHGKT) is G1. A GTP-binding site is contributed by 19 to 26 (GHVDHGKT). T26 contacts Mg(2+). The segment at 60–64 (GITIN) is G2. A G3 region spans residues 81 to 84 (DCPG). Residues 81–85 (DCPGH) and 136–139 (NKAD) contribute to the GTP site. A G4 region spans residues 136–139 (NKAD). The G5 stretch occupies residues 174-176 (SAK).

This sequence belongs to the TRAFAC class translation factor GTPase superfamily. Classic translation factor GTPase family. EF-Tu/EF-1A subfamily. Monomer.

The protein localises to the cytoplasm. The catalysed reaction is GTP + H2O = GDP + phosphate + H(+). Functionally, GTP hydrolase that promotes the GTP-dependent binding of aminoacyl-tRNA to the A-site of ribosomes during protein biosynthesis. This Methylobacillus flagellatus (strain ATCC 51484 / DSM 6875 / VKM B-1610 / KT) protein is Elongation factor Tu 1.